Reading from the N-terminus, the 114-residue chain is MYYKFSGFTQKLAGAWASDAYSPQGLRPVVSTEAPPIIFATPTKLSSGPTAYDYAGKNTVPELQKFFQKSDGVPIHLKRGLPDQMLYRTTMALTVGGTIYCLIALYMASQPRNK.

A mitochondrion-targeting transit peptide spans 1–55 (MYYKFSGFTQKLAGAWASDAYSPQGLRPVVSTEAPPIIFATPTKLSSGPTAYDYA). Position 69 is an N6-acetyllysine (K69). The chain crosses the membrane as a helical span at residues 82–107 (PDQMLYRTTMALTVGGTIYCLIALYM).

The protein belongs to the cytochrome c oxidase VIIa family. Interacts with the mitochondrial respiratory complexes III (CIII) and IV (CIV), promoting their association.

The protein resides in the mitochondrion inner membrane. Its function is as follows. Assembly factor that mediates the formation of some mitochondrial respiratory supercomplexes (respirasomes), thereby promoting oxidative phosphorylation and energy metabolism. Acts as a molecular adapter that associates with both mitochondrial respiratory complexes III (CIII) and IV (CIV), promoting their association. Mediates the formation of various mitochondrial respiratory supercomplexes, such as MCIII(2)IV(2), composed of two CIII and two CIV, and the CS-respirasome (MCI(1)III(2)IV(2)), composed of one CI, two CIII and two CIV. Not involved in the formation of the canonical respirasome (MCI(1)III(2)IV(1)), composed of one CI, two CIII and one CIV. The formation of different respirasomes is important for cell adaptation to oxygen conditions and prevent metabolic exhaustion: supercomplexes mediated by COX7A2L/SCAF1 are required to maintain oxidative phosphorylation upon low oxygen conditions and promote metabolic rewiring toward glycolysis. In Bos taurus (Bovine), this protein is Cytochrome c oxidase subunit 7A2-like, mitochondrial.